We begin with the raw amino-acid sequence, 657 residues long: Glycogen debranching enzyme (657 aa).

Asp-336 serves as the catalytic Nucleophile. Glu-371 (proton donor) is an active-site residue. A compositionally biased stretch (basic and acidic residues) spans 458–467 (NEANGEENRD). The segment at 458–479 (NEANGEENRDGTNNNYSNNHGK) is disordered.

It belongs to the glycosyl hydrolase 13 family.

The catalysed reaction is Hydrolysis of (1-&gt;6)-alpha-D-glucosidic linkages to branches with degrees of polymerization of three or four glucose residues in limit dextrin.. It participates in glycan degradation; glycogen degradation. In terms of biological role, removes maltotriose and maltotetraose chains that are attached by 1,6-alpha-linkage to the limit dextrin main chain, generating a debranched limit dextrin. The chain is Glycogen debranching enzyme from Shigella sonnei (strain Ss046).